Here is a 240-residue protein sequence, read N- to C-terminus: MGKTQPLPILITGGGRRIGLALAWHFINQKQPVIVSYRTHYPAIDGLIKAGAQCIQADFSTNDGVMAFADEVLKSTHGLRAILHNASAWMAEKPGAPLTDVLACMMQIHVNTPYLLNHALERLLRGHGHAASDIIHFTDYVVERGSDKHIAYAASKAALDNMTRSFARKLAPEVKVNSIAPSLILFNEHDDAEYRQQALNKSLMKTAPGEKEVIDLVDYLLTSCFVTGRSLPLDGGRHLR.

The Proton acceptor role is filled by tyrosine 152.

Belongs to the short-chain dehydrogenases/reductases (SDR) family. FolM subfamily.

It carries out the reaction (6S)-5,6,7,8-tetrahydrofolate + NADP(+) = 7,8-dihydrofolate + NADPH + H(+). It catalyses the reaction 7,8-dihydromonapterin + NADPH + H(+) = 5,6,7,8-tetrahydromonapterin + NADP(+). Its function is as follows. Catalyzes the reduction of dihydromonapterin to tetrahydromonapterin. Also has lower activity with dihydrofolate. The protein is Dihydromonapterin reductase (folM) of Escherichia coli O6:K15:H31 (strain 536 / UPEC).